Here is a 597-residue protein sequence, read N- to C-terminus: Sulfite reductase [NADPH] flavoprotein alpha-component (597 aa).

The Flavodoxin-like domain occupies 62-200 (VTVLSASQTG…TADKWIQDVV (139 aa)). FMN contacts are provided by residues 68–73 (SQTGNA), 115–118 (STQG), and 151–160 (LGDTSYPNFC). The region spanning 232-446 (ENPYTAKLIT…VEPNDNFRLP (215 aa)) is the FAD-binding FR-type domain. FAD-binding positions include Thr-320, Asn-354, 384–387 (RLYS), 402–404 (SVG), and 417–420 (GVAS). Residues 517-518 (SR), 523-527 (KIYVQ), and Asp-559 contribute to the NADP(+) site. Position 597 (Tyr-597) interacts with FAD.

Belongs to the NADPH-dependent sulphite reductase flavoprotein subunit CysJ family. It in the N-terminal section; belongs to the flavodoxin family. This sequence in the C-terminal section; belongs to the flavoprotein pyridine nucleotide cytochrome reductase family. As to quaternary structure, alpha(8)-beta(8). The alpha component is a flavoprotein, the beta component is a hemoprotein. FAD is required as a cofactor. Requires FMN as cofactor.

The enzyme catalyses hydrogen sulfide + 3 NADP(+) + 3 H2O = sulfite + 3 NADPH + 4 H(+). The protein operates within sulfur metabolism; hydrogen sulfide biosynthesis; hydrogen sulfide from sulfite (NADPH route): step 1/1. Functionally, component of the sulfite reductase complex that catalyzes the 6-electron reduction of sulfite to sulfide. This is one of several activities required for the biosynthesis of L-cysteine from sulfate. The flavoprotein component catalyzes the electron flow from NADPH -&gt; FAD -&gt; FMN to the hemoprotein component. The chain is Sulfite reductase [NADPH] flavoprotein alpha-component from Mannheimia succiniciproducens (strain KCTC 0769BP / MBEL55E).